The chain runs to 196 residues: Proteasome subunit beta (196 aa).

Met-1 is a propeptide (removed in mature form; by autocatalysis). Thr-2 (nucleophile) is an active-site residue.

Belongs to the peptidase T1B family. As to quaternary structure, the 20S proteasome core is composed of 14 alpha and 14 beta subunits that assemble into four stacked heptameric rings, resulting in a barrel-shaped structure. The two inner rings, each composed of seven catalytic beta subunits, are sandwiched by two outer rings, each composed of seven alpha subunits. The catalytic chamber with the active sites is on the inside of the barrel. Has a gated structure, the ends of the cylinder being occluded by the N-termini of the alpha-subunits. Is capped at one or both ends by the proteasome regulatory ATPase, PAN.

It is found in the cytoplasm. It carries out the reaction Cleavage of peptide bonds with very broad specificity.. With respect to regulation, the formation of the proteasomal ATPase PAN-20S proteasome complex, via the docking of the C-termini of PAN into the intersubunit pockets in the alpha-rings, triggers opening of the gate for substrate entry. Interconversion between the open-gate and close-gate conformations leads to a dynamic regulation of the 20S proteasome proteolysis activity. In terms of biological role, component of the proteasome core, a large protease complex with broad specificity involved in protein degradation. The sequence is that of Proteasome subunit beta from Nanoarchaeum equitans (strain Kin4-M).